The sequence spans 137 residues: Large ribosomal subunit protein bL12 (137 aa).

This sequence belongs to the bacterial ribosomal protein bL12 family. Homodimer. Part of the ribosomal stalk of the 50S ribosomal subunit. Forms a multimeric L10(L12)X complex, where L10 forms an elongated spine to which 2 to 4 L12 dimers bind in a sequential fashion. Binds GTP-bound translation factors.

Functionally, forms part of the ribosomal stalk which helps the ribosome interact with GTP-bound translation factors. Is thus essential for accurate translation. The protein is Large ribosomal subunit protein bL12 of Gloeobacter violaceus (strain ATCC 29082 / PCC 7421).